A 130-amino-acid chain; its full sequence is Methylglyoxal synthase (130 aa).

Residues 1–130 (MSTPRIALIA…DLARRLPVKA (130 aa)) form the MGS-like domain. Substrate is bound by residues His11, Lys15, 37-40 (TGTT), and 57-58 (SG). Catalysis depends on Asp63, which acts as the Proton donor/acceptor. His90 contributes to the substrate binding site.

The protein belongs to the methylglyoxal synthase family.

It carries out the reaction dihydroxyacetone phosphate = methylglyoxal + phosphate. Catalyzes the formation of methylglyoxal from dihydroxyacetone phosphate. This Burkholderia thailandensis (strain ATCC 700388 / DSM 13276 / CCUG 48851 / CIP 106301 / E264) protein is Methylglyoxal synthase.